A 91-amino-acid chain; its full sequence is Putative regulatory protein Cphy_2880 (91 aa).

Belongs to the RemA family.

This Lachnoclostridium phytofermentans (strain ATCC 700394 / DSM 18823 / ISDg) (Clostridium phytofermentans) protein is Putative regulatory protein Cphy_2880.